A 193-amino-acid chain; its full sequence is Adenylate kinase (193 aa).

10–18 serves as a coordination point for ATP; it reads GVPGVGGTT.

It belongs to the archaeal adenylate kinase family. As to quaternary structure, monomer.

Its subcellular location is the cytoplasm. The catalysed reaction is AMP + ATP = 2 ADP. In Methanococcus aeolicus (strain ATCC BAA-1280 / DSM 17508 / OCM 812 / Nankai-3), this protein is Adenylate kinase.